We begin with the raw amino-acid sequence, 228 residues long: L-ornithine N5-acetyltransferase NATA1 (228 aa).

Residues 1–21 (MAPPTAAPEPNTVPETSPTGH) form a disordered region. An N-acetyltransferase domain is found at 77 to 227 (VFLLEISPSP…DALQAIDKLN (151 aa)). Acetyl-CoA-binding positions include 153-155 (IFM), 161-166 (RKGFGK), 192-195 (NVNA), and Y199.

It belongs to the acetyltransferase family.

Its function is as follows. Acetyltransferase that converts ornithine to N5-acetylornithine, which is likely used in plant defense. In Arabidopsis thaliana (Mouse-ear cress), this protein is L-ornithine N5-acetyltransferase NATA1 (NATA1).